A 104-amino-acid polypeptide reads, in one-letter code: MAEETPTRSPGGAAVLDKAPERVRKRSPRYKVLLHNDPVNSMEYVMTTLRQVVPQLSEQDAMAVMLEAHNTGVGLVIVCDIEPAEFYCETLKSKGLTSSIEPED.

Positions 1–20 are disordered; sequence MAEETPTRSPGGAAVLDKAP.

This sequence belongs to the ClpS family. In terms of assembly, binds to the N-terminal domain of the chaperone ClpA.

Functionally, involved in the modulation of the specificity of the ClpAP-mediated ATP-dependent protein degradation. The sequence is that of ATP-dependent Clp protease adapter protein ClpS from Synechococcus sp. (strain CC9902).